Reading from the N-terminus, the 446-residue chain is Iron-sulfur cluster assembly SufBD family protein PH1385 (446 aa).

Belongs to the iron-sulfur cluster assembly SufBD family.

The polypeptide is Iron-sulfur cluster assembly SufBD family protein PH1385 (Pyrococcus horikoshii (strain ATCC 700860 / DSM 12428 / JCM 9974 / NBRC 100139 / OT-3)).